Consider the following 204-residue polypeptide: Thymidylate kinase (204 aa).

11–18 (GLDKSGKT) serves as a coordination point for ATP.

It belongs to the thymidylate kinase family.

It catalyses the reaction dTMP + ATP = dTDP + ADP. It participates in pyrimidine metabolism; dTTP biosynthesis. This is Thymidylate kinase (TMK) from Bos taurus (Bovine).